The primary structure comprises 514 residues: Developmental and secondary metabolism regulator veA (514 aa).

The region spanning 26–218 (NRHLWYQLTV…ADQGCHVRIR (193 aa)) is the Velvet domain. Positions 40 to 45 (ERARAC) match the Nuclear localization signal motif. The interval 219 to 463 (RDVRMRKRDA…PIGSKRKHDQ (245 aa)) is disordered. Residues 228 to 243 (AKSNNGRDRREDDMAR) show a composition bias toward basic and acidic residues. A compositionally biased stretch (low complexity) spans 256 to 267 (SAAARARSMSNS). Over residues 386-396 (SYPSTPVSSHP) the composition is skewed to polar residues. The PEST stretch occupies residues 411-448 (KSPSNSVSPSNSSLKITDLLVQPLPSSEPKLEVGSAPC). Residues 412–423 (SPSNSVSPSNSS) show a composition bias toward low complexity.

Belongs to the velvet family. VeA subfamily. In terms of assembly, component of the heterotrimeric velvet complex composed of laeA, veA and velB; VeA acting as a bridging protein between laeA and velB.

It is found in the nucleus. Its subcellular location is the cytoplasm. Its function is as follows. Component of the velvet transcription factor complex that controls sexual/asexual developmental ratio in response to light, promoting sexual development in the darkness while stimulating asexual sporulation under illumination. The velvet complex hat acts as a global regulator for secondary metabolite gene expression. Controls the expression of the cephalosporin C gene cluster. Regulates hyphal fragmentation. The polypeptide is Developmental and secondary metabolism regulator veA (Hapsidospora chrysogenum (strain ATCC 11550 / CBS 779.69 / DSM 880 / IAM 14645 / JCM 23072 / IMI 49137) (Acremonium chrysogenum)).